The following is a 434-amino-acid chain: Chaperone SurA (434 aa).

Positions 1 to 22 (MKKWKSSLLGIAIWSLAASSMA) are cleaved as a signal peptide. PpiC domains are found at residues 173–274 (TVQF…KVND) and 283–383 (VTEV…EVLD).

It localises to the periplasm. It catalyses the reaction [protein]-peptidylproline (omega=180) = [protein]-peptidylproline (omega=0). In terms of biological role, chaperone involved in the correct folding and assembly of outer membrane proteins. Recognizes specific patterns of aromatic residues and the orientation of their side chains, which are found more frequently in integral outer membrane proteins. May act in both early periplasmic and late outer membrane-associated steps of protein maturation. The polypeptide is Chaperone SurA (Photobacterium profundum (strain SS9)).